A 150-amino-acid polypeptide reads, in one-letter code: Anthranilate synthase component 1 (150 aa).

S40 provides a ligand contact to L-tryptophan. R119 provides a ligand contact to chorismate.

It belongs to the anthranilate synthase component I family. As to quaternary structure, heterotetramer consisting of two non-identical subunits: a beta subunit (TrpG) and a large alpha subunit (TrpE). Mg(2+) serves as cofactor.

The enzyme catalyses chorismate + L-glutamine = anthranilate + pyruvate + L-glutamate + H(+). Its pathway is amino-acid biosynthesis; L-tryptophan biosynthesis; L-tryptophan from chorismate: step 1/5. Its activity is regulated as follows. Feedback inhibited by tryptophan. Part of a heterotetrameric complex that catalyzes the two-step biosynthesis of anthranilate, an intermediate in the biosynthesis of L-tryptophan. In the first step, the glutamine-binding beta subunit (TrpG) of anthranilate synthase (AS) provides the glutamine amidotransferase activity which generates ammonia as a substrate that, along with chorismate, is used in the second step, catalyzed by the large alpha subunit of AS (TrpE) to produce anthranilate. In the absence of TrpG, TrpE can synthesize anthranilate directly from chorismate and high concentrations of ammonia. This is Anthranilate synthase component 1 (trpE) from Citrobacter freundii.